A 328-amino-acid polypeptide reads, in one-letter code: MSEKIRVLLYYKYVSIENAQEYAAKHLEFCKSIGLKGRILIADEGINGTVSGDYETTQKYMDWVHSDERFADLWFKIDEENQQAFRKMFVRYKKEIVHLGLEDNNFDSDINPLETTGEYLNPKQFKEALLDEDTVVLDTRNDYEYDLGHFRGAIRPDIRNFRELPQWVRDNKDKFMEKRVVVYCTGGVRCEKFSGWMVREGFKDVGQLHGGIATYGKDPEVQGELWDGAMYVFDDRISVPINHVNPTVISKDYFDGTPCERYVNCANPFCNKQIFASEENETKYVRGCSPECRAHERNRYVQENGLSRQEWAERLEAIGESLPEFVGA.

The Rhodanese domain maps to 130 to 224; sequence LDEDTVVLDT…YGKDPEVQGE (95 aa). Residue cysteine 184 is the Cysteine persulfide intermediate of the active site.

Belongs to the TrhO family.

It catalyses the reaction uridine(34) in tRNA + AH2 + O2 = 5-hydroxyuridine(34) in tRNA + A + H2O. Functionally, catalyzes oxygen-dependent 5-hydroxyuridine (ho5U) modification at position 34 in tRNAs. The polypeptide is tRNA uridine(34) hydroxylase (Streptococcus pyogenes serotype M49 (strain NZ131)).